A 431-amino-acid chain; its full sequence is Tol-Pal system protein TolB (431 aa).

The first 26 residues, 1 to 26 (MSLMTKLGFRALVASCLITAGSAANA), serve as a signal peptide directing secretion. The interval 406–431 (DGSAPPQILSVQGGSVREPSWGPFMQ) is disordered.

The protein belongs to the TolB family. In terms of assembly, the Tol-Pal system is composed of five core proteins: the inner membrane proteins TolA, TolQ and TolR, the periplasmic protein TolB and the outer membrane protein Pal. They form a network linking the inner and outer membranes and the peptidoglycan layer.

It localises to the periplasm. Functionally, part of the Tol-Pal system, which plays a role in outer membrane invagination during cell division and is important for maintaining outer membrane integrity. The sequence is that of Tol-Pal system protein TolB from Burkholderia cenocepacia (strain HI2424).